The chain runs to 1022 residues: Sodium/potassium-transporting ATPase subunit alpha (1022 aa).

Residues 1–5 (MGKGA) constitute a propeptide that is removed on maturation. The disordered stretch occupies residues 1-34 (MGKGAASEKYQPAATSENAKNSKKSKSKTTDLDE). Over 6 to 87 (ASEKYQPAAT…NALTPPPTTP (82 aa)) the chain is Cytoplasmic. Ser-16 carries the phosphoserine; by PKC modification. Positions 82-84 (PPP) are interaction with phosphoinositide-3 kinase. A helical membrane pass occupies residues 88-108 (EWIKFCRQLFGGFSILLWTGA). Over 109-131 (ILCFLAYGIQVATVDNPANDNLY) the chain is Lumenal. The helical transmembrane segment at 132-152 (LGVVLSTVVIITGCFSYYQEA) threads the bilayer. The Cytoplasmic segment spans residues 153–288 (KSSKIMDSFK…VGQTPIAAEI (136 aa)). The interval 215–235 (NSSLTGESEPQSRSPEYSSEN) is disordered. A helical membrane pass occupies residues 289-308 (EHFIHIITGVAVFLGVSFFI). Topologically, residues 309 to 320 (LSLILGYTWLEA) are lumenal. Residues 321–338 (VIFLIGIIVANVPEGLLA) form a helical membrane-spanning segment. The Cytoplasmic portion of the chain corresponds to 339-771 (TVTVCLTLTA…EEGRLIFDNL (433 aa)). The 4-aspartylphosphate intermediate role is filled by Asp-376. 2 residues coordinate Mg(2+): Asp-716 and Asp-720. A helical membrane pass occupies residues 772–791 (KKSIAYTLTSNIPEITPFLV). Over 792 to 801 (FIIANVPLPL) the chain is Lumenal. The helical transmembrane segment at 802–822 (GTVTILCIDLGTDMVPAISLA) threads the bilayer. The Cytoplasmic portion of the chain corresponds to 823–842 (YERAESDIMKRQPRNPKTDK). Residues 843–865 (LVNERLISMAYGQIGMIQALGGF) traverse the membrane as a helical segment. Residues 866 to 917 (FSYFVILAENGFLPIDLIGIREKWDELWTQDLEDSYGQQWTYEQRKIVEYTC) lie on the Lumenal side of the membrane. A helical transmembrane segment spans residues 918 to 937 (HTSFFVSIVIVQWADLIICK). Residues 938–950 (TRRNSIFQQGMKN) are Cytoplasmic-facing. Ser-942 is subject to Phosphoserine; by PKA. The chain crosses the membrane as a helical span at residues 951 to 969 (KILIFGLFEETALAAFLSY). The Lumenal portion of the chain corresponds to 970–984 (TPGTDIALRMYPLKP). Residues 985-1005 (SWWFCAFPYSLIIFLYDEARR) form a helical membrane-spanning segment. Over 1006-1022 (FILRRNPGGWVEQETYY) the chain is Cytoplasmic.

Belongs to the cation transport ATPase (P-type) (TC 3.A.3) family. Type IIC subfamily. The sodium/potassium-transporting ATPase is composed of a catalytic alpha subunit, an auxiliary non-catalytic beta subunit and an additional regulatory subunit.

It localises to the cell membrane. The catalysed reaction is K(+)(out) + Na(+)(in) + ATP + H2O = K(+)(in) + Na(+)(out) + ADP + phosphate + H(+). Functionally, this is the catalytic component of the active enzyme, which catalyzes the hydrolysis of ATP coupled with the exchange of sodium and potassium ions across the plasma membrane. This action creates the electrochemical gradient of sodium and potassium ions, providing the energy for active transport of various nutrients. In Tetronarce californica (Pacific electric ray), this protein is Sodium/potassium-transporting ATPase subunit alpha.